A 549-amino-acid polypeptide reads, in one-letter code: Protein EPD2 (549 aa).

The signal sequence occupies residues 1-20 (MISVIKSLLTLSVLSTLAAA). Residue N41 is glycosylated (N-linked (GlcNAc...) asparagine). An intrachain disulfide couples C82 to C111. Residues N173 and N261 are each glycosylated (N-linked (GlcNAc...) asparagine). Intrachain disulfides connect C224–C358, C242–C273, C381–C432, C390–C456, and C409–C414. N467 carries an N-linked (GlcNAc...) asparagine glycan. Residues 470–518 (ASTSCSAAGGRGLQSGRRSSTTRGGSSSSRSSSSSSSSSTGSGSSNAGI) are disordered. Low complexity predominate over residues 484-514 (SGRRSSTTRGGSSSSRSSSSSSSSSTGSGSS).

Belongs to the glycosyl hydrolase 72 family.

Its subcellular location is the cell membrane. The polypeptide is Protein EPD2 (EPD2) (Candida maltosa (Yeast)).